A 262-amino-acid polypeptide reads, in one-letter code: Acyl-[acyl-carrier-protein]--UDP-N-acetylglucosamine O-acyltransferase (262 aa).

Belongs to the transferase hexapeptide repeat family. LpxA subfamily. Homotrimer.

Its subcellular location is the cytoplasm. The catalysed reaction is a (3R)-hydroxyacyl-[ACP] + UDP-N-acetyl-alpha-D-glucosamine = a UDP-3-O-[(3R)-3-hydroxyacyl]-N-acetyl-alpha-D-glucosamine + holo-[ACP]. Its pathway is glycolipid biosynthesis; lipid IV(A) biosynthesis; lipid IV(A) from (3R)-3-hydroxytetradecanoyl-[acyl-carrier-protein] and UDP-N-acetyl-alpha-D-glucosamine: step 1/6. Functionally, involved in the biosynthesis of lipid A, a phosphorylated glycolipid that anchors the lipopolysaccharide to the outer membrane of the cell. The sequence is that of Acyl-[acyl-carrier-protein]--UDP-N-acetylglucosamine O-acyltransferase from Histophilus somni (strain 2336) (Haemophilus somnus).